The following is a 288-amino-acid chain: Scolexin B (288 aa).

The first 20 residues, 1–20, serve as a signal peptide directing secretion; the sequence is MFASKLAVCSALALLAVAHA. The 267-residue stretch at 21-287 folds into the Peptidase S1 domain; the sequence is APGGNDIQKI…VRDWIKKVTN (267 aa). The segment at 27 to 56 is disordered; it reads IQKITKAPNVPTKAEGDAASKASAPAIPPK. Cys-72 and Cys-88 form a disulfide bridge. Residues His-87 and Asp-145 each act as charge relay system in the active site. 2 disulfides stabilise this stretch: Cys-210/Cys-223 and Cys-235/Cys-264. Ser-239 serves as the catalytic Charge relay system.

Belongs to the peptidase S1 family.

This chain is Scolexin B, found in Heliothis virescens (Tobacco budworm moth).